Reading from the N-terminus, the 301-residue chain is Small ribosomal subunit protein uS2 (301 aa).

Belongs to the universal ribosomal protein uS2 family. As to quaternary structure, component of the small ribosomal subunit. Mature ribosomes consist of a small (40S) and a large (60S) subunit. The 40S subunit contains about 33 different proteins and 1 molecule of RNA (18S). The 60S subunit contains about 49 different proteins and 3 molecules of RNA (28S, 5.8S and 5S). Interacts with ribosomal protein S21.

It is found in the cytoplasm. Its function is as follows. Required for the assembly and/or stability of the 40S ribosomal subunit. Required for the processing of the 20S rRNA-precursor to mature 18S rRNA in a late step of the maturation of 40S ribosomal subunits. The chain is Small ribosomal subunit protein uS2 from Brugia malayi (Filarial nematode worm).